A 1030-amino-acid chain; its full sequence is Pro-apoptotic serine protease NMA111 (1030 aa).

A disordered region spans residues 1-48 (MNGTTSPIAARSKRKEPPHTVDGRHPKHHRTNGEVAPAADNTPDNQDE). Residues 15–24 (KEPPHTVDGR) show a composition bias toward basic and acidic residues. Residues 89-279 (VVSIRFCQTC…LPLDRPLRAL (191 aa)) are serine protease. Residues His-127, Asp-158, and Ser-240 each act as charge relay system in the active site. 2 PDZ domains span residues 312–384 (PEWE…LRGG) and 880–960 (AVSF…LRAM).

It belongs to the peptidase S1C family.

It localises to the nucleus. Its function is as follows. Nuclear serine protease which mediates apoptosis. This Chaetomium globosum (strain ATCC 6205 / CBS 148.51 / DSM 1962 / NBRC 6347 / NRRL 1970) (Soil fungus) protein is Pro-apoptotic serine protease NMA111 (NMA111).